A 628-amino-acid polypeptide reads, in one-letter code: tRNA uridine 5-carboxymethylaminomethyl modification enzyme MnmG (628 aa).

13–18 contacts FAD; sequence GAGHAG. 281–295 provides a ligand contact to NAD(+); it reads GARYCPSIEDKIKKF.

This sequence belongs to the MnmG family. In terms of assembly, homodimer. Heterotetramer of two MnmE and two MnmG subunits. Requires FAD as cofactor.

It is found in the cytoplasm. Its function is as follows. NAD-binding protein involved in the addition of a carboxymethylaminomethyl (cmnm) group at the wobble position (U34) of certain tRNAs, forming tRNA-cmnm(5)s(2)U34. The protein is tRNA uridine 5-carboxymethylaminomethyl modification enzyme MnmG of Treponema denticola (strain ATCC 35405 / DSM 14222 / CIP 103919 / JCM 8153 / KCTC 15104).